A 730-amino-acid polypeptide reads, in one-letter code: 1,4-alpha-glucan branching enzyme GlgB (730 aa).

Catalysis depends on Asp-405, which acts as the Nucleophile. The active-site Proton donor is the Glu-458.

This sequence belongs to the glycosyl hydrolase 13 family. GlgB subfamily. Monomer.

It catalyses the reaction Transfers a segment of a (1-&gt;4)-alpha-D-glucan chain to a primary hydroxy group in a similar glucan chain.. The protein operates within glycan biosynthesis; glycogen biosynthesis. Its function is as follows. Catalyzes the formation of the alpha-1,6-glucosidic linkages in glycogen by scission of a 1,4-alpha-linked oligosaccharide from growing alpha-1,4-glucan chains and the subsequent attachment of the oligosaccharide to the alpha-1,6 position. The polypeptide is 1,4-alpha-glucan branching enzyme GlgB (Haemophilus influenzae (strain PittGG)).